Here is a 96-residue protein sequence, read N- to C-terminus: Protein RnfH (96 aa).

Belongs to the UPF0125 (RnfH) family.

The sequence is that of Protein RnfH from Citrobacter koseri (strain ATCC BAA-895 / CDC 4225-83 / SGSC4696).